Here is a 198-residue protein sequence, read N- to C-terminus: tRNA (pseudouridine(54)-N(1))-methyltransferase (198 aa).

S-adenosyl-L-methionine contacts are provided by leucine 134 and glycine 155.

It belongs to the methyltransferase superfamily. TrmY family. As to quaternary structure, homodimer.

It is found in the cytoplasm. The enzyme catalyses pseudouridine(54) in tRNA + S-adenosyl-L-methionine = N(1)-methylpseudouridine(54) in tRNA + S-adenosyl-L-homocysteine + H(+). Functionally, specifically catalyzes the N1-methylation of pseudouridine at position 54 (Psi54) in tRNAs. The sequence is that of tRNA (pseudouridine(54)-N(1))-methyltransferase from Thermococcus kodakarensis (strain ATCC BAA-918 / JCM 12380 / KOD1) (Pyrococcus kodakaraensis (strain KOD1)).